A 78-amino-acid polypeptide reads, in one-letter code: Large ribosomal subunit protein bL28 (78 aa).

The protein belongs to the bacterial ribosomal protein bL28 family.

The sequence is that of Large ribosomal subunit protein bL28 from Legionella pneumophila (strain Paris).